A 415-amino-acid polypeptide reads, in one-letter code: Corticotropin-releasing factor receptor 1 (415 aa).

Residues 1-23 form the signal peptide; the sequence is MGRRPQLRLVKALLLLGLNSISA. Residues 24–111 lie on the Extracellular side of the membrane; that stretch reads SLQDQHCESL…CQEILSEGEK (88 aa). 3 disulfides stabilise this stretch: Cys-30/Cys-54, Cys-44/Cys-87, and Cys-68/Cys-102. Residues Asn-38, Asn-45, Asn-51, Asn-78, Asn-90, and Asn-98 are each glycosylated (N-linked (GlcNAc...) asparagine). Residues 99-108 form an important for peptide agonist binding region; it reads HSECQEILSE. A helical transmembrane segment spans residues 112-142; the sequence is SKAHYHIAVIINYLGHCISLAALLVAFVLFL. Residues 143 to 149 lie on the Cytoplasmic side of the membrane; it reads RLRSIRC. The chain crosses the membrane as a helical span at residues 150 to 174; it reads VRNIIHWNLISAFILRNATWFVVQL. The Extracellular portion of the chain corresponds to 175-189; that stretch reads TMSPEVHQSNVGWCR. Cys-188 and Cys-258 are disulfide-bonded. The helical transmembrane segment at 190–218 threads the bilayer; sequence LVTAAYNYFHVTNFFWMFGEGCYLHTAVV. At 219–225 the chain is on the cytoplasmic side; it reads LTYSTDR. The chain crosses the membrane as a helical span at residues 226-253; that stretch reads LRKWMFICIGWGVPFPIIVAWAIGKLYY. Residues 254-269 lie on the Extracellular side of the membrane; sequence DNEKCWFGKRPGVYTD. A helical membrane pass occupies residues 270–295; sequence YIYQGPMILVLLINFIFLFNIVRILM. The tract at residues 280-290 is important for antagonist binding; that stretch reads LLINFIFLFNI. The Cytoplasmic segment spans residues 296 to 306; that stretch reads TKLRASTTSET. Ser-301 is subject to Phosphoserine; by PKA. The helical transmembrane segment at 307-331 threads the bilayer; the sequence is IQYRKAVKATLVLLPLLGITYMLFF. Topologically, residues 332–338 are extracellular; the sequence is VNPGEDE. The chain crosses the membrane as a helical span at residues 339–368; that stretch reads VSRVVFIYFNSFLESFQGFFVSVFYCFLNS. The Cytoplasmic portion of the chain corresponds to 369 to 415; it reads EVRSAIRKRWHRWQDKHSIRARVARAMSIPTSPTRVSFHSIKQSTAV.

This sequence belongs to the G-protein coupled receptor 2 family. Heterodimer; heterodimerizes with GPER1. Interacts (via N-terminal extracellular domain) with CRH and UCN. Interacts with DLG1; this inhibits endocytosis of CRHR1 after agonist binding. In terms of processing, C-terminal Ser or Thr residues may be phosphorylated. Phosphorylation at Ser-301 by PKA prevents maximal coupling to Gq-protein, and thereby negatively regulates downstream signaling.

The protein resides in the cell membrane. It localises to the endosome. Its function is as follows. G-protein coupled receptor for CRH (corticotropin-releasing factor) and UCN (urocortin). Has high affinity for CRH and UCN. Ligand binding causes a conformation change that triggers signaling via guanine nucleotide-binding proteins (G proteins) and down-stream effectors, such as adenylate cyclase. Promotes the activation of adenylate cyclase, leading to increased intracellular cAMP levels. Inhibits the activity of the calcium channel CACNA1H. Required for normal embryonic development of the adrenal gland and for normal hormonal responses to stress. Plays a role in the response to anxiogenic stimuli. This Ovis aries (Sheep) protein is Corticotropin-releasing factor receptor 1 (CRHR1).